The following is a 203-amino-acid chain: Guanylate kinase (203 aa).

Residues 4–183 enclose the Guanylate kinase-like domain; it reads GKLFVISAPS…ASTLLKSIIW (180 aa). 11–18 is an ATP binding site; it reads APSGAGKT.

Belongs to the guanylate kinase family.

Its subcellular location is the cytoplasm. It catalyses the reaction GMP + ATP = GDP + ADP. Functionally, essential for recycling GMP and indirectly, cGMP. The protein is Guanylate kinase of Desulfotalea psychrophila (strain LSv54 / DSM 12343).